Here is a 228-residue protein sequence, read N- to C-terminus: Orotidine 5'-phosphate decarboxylase (228 aa).

Substrate-binding positions include Asp-8, Lys-30, 59-68, Thr-118, Arg-178, Gln-187, Gly-207, and Arg-208; that span reads DLKLHDIPNT. Lys-61 functions as the Proton donor in the catalytic mechanism.

It belongs to the OMP decarboxylase family. Type 1 subfamily. In terms of assembly, homodimer.

The enzyme catalyses orotidine 5'-phosphate + H(+) = UMP + CO2. It functions in the pathway pyrimidine metabolism; UMP biosynthesis via de novo pathway; UMP from orotate: step 2/2. Catalyzes the decarboxylation of orotidine 5'-monophosphate (OMP) to uridine 5'-monophosphate (UMP). In Wolinella succinogenes (strain ATCC 29543 / DSM 1740 / CCUG 13145 / JCM 31913 / LMG 7466 / NCTC 11488 / FDC 602W) (Vibrio succinogenes), this protein is Orotidine 5'-phosphate decarboxylase.